Reading from the N-terminus, the 234-residue chain is Ribosomal RNA small subunit methyltransferase G (234 aa).

S-adenosyl-L-methionine-binding positions include Gly-96, Leu-101, 119 to 121, 147 to 148, and Arg-161; these read DAT and VE.

The protein belongs to the methyltransferase superfamily. RNA methyltransferase RsmG family.

Its subcellular location is the cytoplasm. Functionally, specifically methylates the N7 position of a guanine in 16S rRNA. In Chlorobium chlorochromatii (strain CaD3), this protein is Ribosomal RNA small subunit methyltransferase G.